Here is a 480-residue protein sequence, read N- to C-terminus: MDLLQILLAIAGLLAILLLQKQWRTKTSPGAKAGRKLPPEPAGAWPVIGHLHKLGGPNPIYRNLAEWSDKYGPVMTLKLGMQNAVVVSDREAIKECFTTNDKALADRPPSSIGLHLGFNYAAIGAAPYGPYWRDMRKLVLLEVLSSRRLEMLRNVRISEIGTSIKELYSNIIRSSGGSGPAKVVISHWIEQLTLNYILRTIAGRRFSDDSSKDAQYVKGVINDFMYFAGQFVVSDVIPIPLLRWLDPQGHLKGMKRVAKEVDTMCEAWIQEHVQRRMREKPGPGQEQDFIDVLLNNRDVMRKAQEEIDNHVGKERWVDETDLKHLVYLQAIVKEGLRLYPPGPLGAPHRAIEDCQVGGYFIPKGTQLLVNVWKLHRDPRVWSEPEKFMPERFLTRQAEVDVFGHHFELLPFGSGRRACPGITFAVQVMHLTVARLLQGFDMTTPSNLPVDMTEGPGVTMPKAHPVEVLMMPRLPSALYEP.

A helical membrane pass occupies residues 3–23; sequence LLQILLAIAGLLAILLLQKQW. C418 is a heme binding site.

It belongs to the cytochrome P450 family. It depends on heme as a cofactor. In terms of tissue distribution, mainly expressed in roots and, to a lesser extent, in leaves.

The protein localises to the membrane. The enzyme catalyses vinorine + reduced [NADPH--hemoprotein reductase] + O2 = vomilenine + oxidized [NADPH--hemoprotein reductase] + H2O + H(+). It catalyses the reaction vomilenine = perakine. Its pathway is alkaloid biosynthesis; ajmaline biosynthesis. In terms of biological role, a cytochrome P450 monooxygenase involved in the biosynthesis of ajmaline-type monoterpenoid indole alkaloids (MIAs) natural products, important plant-derived pharmaceuticals used in the therapy of heart disorders. Catalyzes the hydroxylation of vinorine to vomilenine, an intermediate chemical in the biosynthesis of ajmaline. Supports also vomilenine isomerization to perakine. The polypeptide is Vinorine hydroxylase (Rauvolfia serpentina (Serpentine wood)).